We begin with the raw amino-acid sequence, 201 residues long: Peptide deformylase (201 aa).

The span at 1 to 17 (MANNFSQLARKSKTNSP) shows a compositional bias: polar residues. The disordered stretch occupies residues 1 to 24 (MANNFSQLARKSKTNSPIEKVSKE). 2 residues coordinate Fe cation: Cys-121 and His-163. The active site involves Glu-164. His-167 is a binding site for Fe cation.

The protein belongs to the polypeptide deformylase family. Requires Fe(2+) as cofactor.

The catalysed reaction is N-terminal N-formyl-L-methionyl-[peptide] + H2O = N-terminal L-methionyl-[peptide] + formate. Its function is as follows. Removes the formyl group from the N-terminal Met of newly synthesized proteins. Requires at least a dipeptide for an efficient rate of reaction. N-terminal L-methionine is a prerequisite for activity but the enzyme has broad specificity at other positions. The chain is Peptide deformylase from Prochlorococcus marinus subsp. pastoris (strain CCMP1986 / NIES-2087 / MED4).